Consider the following 120-residue polypeptide: Large ribosomal subunit protein bL17 (120 aa).

The protein belongs to the bacterial ribosomal protein bL17 family. As to quaternary structure, part of the 50S ribosomal subunit. Contacts protein L32.

The polypeptide is Large ribosomal subunit protein bL17 (Bacillus cereus (strain ATCC 14579 / DSM 31 / CCUG 7414 / JCM 2152 / NBRC 15305 / NCIMB 9373 / NCTC 2599 / NRRL B-3711)).